The following is a 1375-amino-acid chain: DNA-directed RNA polymerase subunit beta (1375 aa).

It belongs to the RNA polymerase beta chain family. In terms of assembly, the RNAP catalytic core consists of 2 alpha, 1 beta, 1 beta' and 1 omega subunit. When a sigma factor is associated with the core the holoenzyme is formed, which can initiate transcription.

It carries out the reaction RNA(n) + a ribonucleoside 5'-triphosphate = RNA(n+1) + diphosphate. In terms of biological role, DNA-dependent RNA polymerase catalyzes the transcription of DNA into RNA using the four ribonucleoside triphosphates as substrates. The sequence is that of DNA-directed RNA polymerase subunit beta from Coxiella burnetii (strain Dugway 5J108-111).